The primary structure comprises 148 residues: SsrA-binding protein (148 aa).

A compositionally biased stretch (basic and acidic residues) spans 129 to 142 (ETEKKRDWEREKAR). Positions 129–148 (ETEKKRDWEREKARIMRAGT) are disordered.

Belongs to the SmpB family.

The protein resides in the cytoplasm. Functionally, required for rescue of stalled ribosomes mediated by trans-translation. Binds to transfer-messenger RNA (tmRNA), required for stable association of tmRNA with ribosomes. tmRNA and SmpB together mimic tRNA shape, replacing the anticodon stem-loop with SmpB. tmRNA is encoded by the ssrA gene; the 2 termini fold to resemble tRNA(Ala) and it encodes a 'tag peptide', a short internal open reading frame. During trans-translation Ala-aminoacylated tmRNA acts like a tRNA, entering the A-site of stalled ribosomes, displacing the stalled mRNA. The ribosome then switches to translate the ORF on the tmRNA; the nascent peptide is terminated with the 'tag peptide' encoded by the tmRNA and targeted for degradation. The ribosome is freed to recommence translation, which seems to be the essential function of trans-translation. The polypeptide is SsrA-binding protein (Burkholderia orbicola (strain AU 1054)).